Consider the following 64-residue polypeptide: Conotoxin Ts-011 (64 aa).

A signal peptide spans 1 to 22 (MHCLPVLVILLLLIASTPSVDA). A propeptide spanning residues 23–51 (RPKTKDDVPLASFHGADNANRILRTLWNL) is cleaved from the precursor. At isoleucine 63 the chain carries Isoleucine amide.

Belongs to the conotoxin T superfamily. Post-translationally, contains 2 disulfide bonds that can be either 'C1-C3, C2-C4' or 'C1-C4, C2-C3', since these disulfide connectivities have been observed for conotoxins with cysteine framework V (for examples, see AC P0DQQ7 and AC P81755). As to expression, expressed by the venom duct.

It is found in the secreted. This Conus tessulatus (Tessellate cone) protein is Conotoxin Ts-011.